The following is a 617-amino-acid chain: Arrestin domain-containing protein B (617 aa).

A C2 domain is found at 1–109 (MDNRGLRLFI…ATFGQTDKWL (109 aa)). Ca(2+) is bound by residues D20, D27, D76, D78, and D84.

The protein belongs to the arrestin family. Requires Ca(2+) as cofactor.

This is Arrestin domain-containing protein B (adcB) from Dictyostelium discoideum (Social amoeba).